The following is a 179-amino-acid chain: Adenine phosphoribosyltransferase (179 aa).

The protein belongs to the purine/pyrimidine phosphoribosyltransferase family. Homodimer.

The protein resides in the cytoplasm. The catalysed reaction is AMP + diphosphate = 5-phospho-alpha-D-ribose 1-diphosphate + adenine. Its pathway is purine metabolism; AMP biosynthesis via salvage pathway; AMP from adenine: step 1/1. Its function is as follows. Catalyzes a salvage reaction resulting in the formation of AMP, that is energically less costly than de novo synthesis. This chain is Adenine phosphoribosyltransferase, found in Bradyrhizobium sp. (strain ORS 278).